We begin with the raw amino-acid sequence, 379 residues long: Putative thylakoid lumen peptidyl-prolyl cis-trans isomerase sll0408 (379 aa).

The N-terminal stretch at 1–33 (MQIIKTPLGIITRRGLQLSLLSLLLTMLSLTWA) is a signal peptide. Residues 190 to 378 (GRATVEMTTN…SGADNLVNGN (189 aa)) form the PPIase cyclophilin-type domain.

It localises to the cellular thylakoid lumen. It carries out the reaction [protein]-peptidylproline (omega=180) = [protein]-peptidylproline (omega=0). Its function is as follows. PPIases accelerate the folding of proteins. It catalyzes the cis-trans isomerization of proline imidic peptide bonds in oligopeptides. Required for the assembly and stabilization of PSII. The polypeptide is Putative thylakoid lumen peptidyl-prolyl cis-trans isomerase sll0408 (Synechocystis sp. (strain ATCC 27184 / PCC 6803 / Kazusa)).